A 190-amino-acid chain; its full sequence is MRLARELLGGTLVRVTPDGHRLSGRVVEVEAYDCPRDPACTAGRFHAARSAEMAIAPGHWLFWFAHGHPLLQVACRQEGVSASVLIRALEPLEGAGKMLDYRPVTRQRDLTSGPAKLVYALGLDPMQISHRPVNSPELHLLAPETPLADDEVTVTARVGIREGRNLPWRFLIRGNGWVSPAQPSMELAAP.

It belongs to the DNA glycosylase MPG family.

This is Putative 3-methyladenine DNA glycosylase from Deinococcus radiodurans (strain ATCC 13939 / DSM 20539 / JCM 16871 / CCUG 27074 / LMG 4051 / NBRC 15346 / NCIMB 9279 / VKM B-1422 / R1).